A 510-amino-acid chain; its full sequence is Lysine--tRNA ligase (510 aa).

Residues glutamate 420 and glutamate 427 each contribute to the Mg(2+) site.

Belongs to the class-II aminoacyl-tRNA synthetase family. In terms of assembly, homodimer. Mg(2+) is required as a cofactor.

It localises to the cytoplasm. The enzyme catalyses tRNA(Lys) + L-lysine + ATP = L-lysyl-tRNA(Lys) + AMP + diphosphate. The sequence is that of Lysine--tRNA ligase from Clostridium novyi (strain NT).